The sequence spans 71 residues: Small ribosomal subunit protein eS31 (71 aa).

Zn(2+) is bound by residues cysteine 35, cysteine 38, cysteine 53, and cysteine 56. The C4-type zinc-finger motif lies at 35-56; sequence CPKCGAGVFMAEHLNRYACGKC.

This sequence belongs to the eukaryotic ribosomal protein eS31 family. As to quaternary structure, part of the 30S ribosomal subunit. Requires Zn(2+) as cofactor.

In Methanococcus vannielii (strain ATCC 35089 / DSM 1224 / JCM 13029 / OCM 148 / SB), this protein is Small ribosomal subunit protein eS31.